We begin with the raw amino-acid sequence, 285 residues long: (3S)-malyl-CoA thioesterase (285 aa).

2 residues coordinate substrate: arginine 70 and glutamate 122. Residues glutamate 122 and aspartate 148 each contribute to the Mg(2+) site.

It belongs to the HpcH/HpaI aldolase family. In terms of assembly, homodimer or homotrimer. Requires Mg(2+) as cofactor.

The catalysed reaction is (S)-malyl-CoA + H2O = (S)-malate + CoA + H(+). Its function is as follows. Catalyzes the hydrolysis of (3S)-malyl-CoA to (3S)-malate and free CoA. Inactive towards beta-methylmalyl-CoA and other CoA esters. The chain is (3S)-malyl-CoA thioesterase from Cereibacter sphaeroides (strain ATCC 17025 / ATH 2.4.3) (Rhodobacter sphaeroides).